The following is an 820-amino-acid chain: Inhibitor of nuclear factor kappa-B kinase epsilon subunit homolog 1 (820 aa).

The region spanning 21-299 (LFNDESIGKG…TDIFEFQPVT (279 aa)) is the Protein kinase domain. ATP contacts are provided by residues 27–35 (IGKGAYSEV) and Lys49. Catalysis depends on Asp149, which acts as the Proton acceptor. The interval 758 to 798 (SPNKEQFPKPEQDSILESSIDEGSTSFESTPPSSPPDVGSN) is disordered.

Belongs to the protein kinase superfamily. Ser/Thr protein kinase family. In terms of assembly, interacts with allo-1 (via N-terminus); the interaction is direct. In terms of tissue distribution, expressed in oocytes.

The protein localises to the cytoplasm. It catalyses the reaction L-seryl-[protein] + ATP = O-phospho-L-seryl-[protein] + ADP + H(+). It carries out the reaction L-threonyl-[protein] + ATP = O-phospho-L-threonyl-[protein] + ADP + H(+). Its function is as follows. Serine/threonine-protein kinase, which plays a role in regulating allophagy, an autophagic process in which paternal organelles, including mitochondria and membranous organelles, are degraded in embryos. Phosphorylates the allophagy receptor allo-1, which is required for allophagy. The polypeptide is Inhibitor of nuclear factor kappa-B kinase epsilon subunit homolog 1 (Caenorhabditis elegans).